The following is a 450-amino-acid chain: Ribulose bisphosphate carboxylase large chain (450 aa).

K4 carries the post-translational modification N6,N6,N6-trimethyllysine. The substrate site is built by N113 and T163. K165 acts as the Proton acceptor in catalysis. K167 contributes to the substrate binding site. Positions 191, 193, and 194 each coordinate Mg(2+). An N6-carboxylysine modification is found at K191. The Proton acceptor role is filled by H284. Residues R285, H317, and S369 each contribute to the substrate site.

It belongs to the RuBisCO large chain family. Type I subfamily. As to quaternary structure, heterohexadecamer of 8 large chains and 8 small chains; disulfide-linked. The disulfide link is formed within the large subunit homodimers. The cofactor is Mg(2+). Post-translationally, the disulfide bond which can form in the large chain dimeric partners within the hexadecamer appears to be associated with oxidative stress and protein turnover.

It localises to the plastid. Its subcellular location is the chloroplast. It catalyses the reaction 2 (2R)-3-phosphoglycerate + 2 H(+) = D-ribulose 1,5-bisphosphate + CO2 + H2O. The enzyme catalyses D-ribulose 1,5-bisphosphate + O2 = 2-phosphoglycolate + (2R)-3-phosphoglycerate + 2 H(+). Functionally, ruBisCO catalyzes two reactions: the carboxylation of D-ribulose 1,5-bisphosphate, the primary event in carbon dioxide fixation, as well as the oxidative fragmentation of the pentose substrate in the photorespiration process. Both reactions occur simultaneously and in competition at the same active site. The sequence is that of Ribulose bisphosphate carboxylase large chain from Crassula rupestris subsp. marnieriana (Pygmyweed).